The primary structure comprises 431 residues: MNILLDQLFNFGVNNGDINVKSTMSDEIISAHKIILVNVSDYFKTQELFPSGKSSITELPFCIDVIKKCIHIFYSTNITEEITKNISIDNLIELFHLITFLCPNKKLTVEMLNVKSALLTGFIMNYLMTNDYCQIIDEDLRSKIRYLELYDIMNGPYNQNPDHELPNPQKDKNYCIVKYTDGYHNLTLGYKSIYMDYKYFQLGKTKGSIFDNKTLANMVLRSIIPNDEERVLFLRTISQWINPGRSEKYIILCTGNGYRVLEMLVKQIFEIEFSKEVKRIYWYNFKNKISKNKQKLFIKEKPIDLLTITGTGILSGIGATIDMCNEEIAKQKNKEYRNKMHNDVVANTKLYSDLIEFMKSQTFDGKNINHNILVEFDESKLNYVEKEINGSYIKINTVYNQFIDHQYKYTDIYFELSNLIMDYYVEQRISK.

This is an uncharacterized protein from Acanthamoeba polyphaga mimivirus (APMV).